Here is a 428-residue protein sequence, read N- to C-terminus: Ribulose bisphosphate carboxylase (428 aa).

The Proton acceptor role is filled by lysine 151. Residue lysine 153 participates in substrate binding. The Mg(2+) site is built by lysine 177, aspartate 179, and glutamate 180. An N6-carboxylysine modification is found at lysine 177. Histidine 270 serves as the catalytic Proton acceptor. Residues arginine 271, histidine 303, serine 354–glycine 356, and glutamine 376–glycine 379 each bind substrate.

The protein belongs to the RuBisCO large chain family. Type III subfamily. As to quaternary structure, homodimer or homodecamer. In contrast to form I RuBisCO, the form III RuBisCO is composed solely of large subunits. It depends on Mg(2+) as a cofactor.

The catalysed reaction is 2 (2R)-3-phosphoglycerate + 2 H(+) = D-ribulose 1,5-bisphosphate + CO2 + H2O. It catalyses the reaction D-ribulose 1,5-bisphosphate + O2 = 2-phosphoglycolate + (2R)-3-phosphoglycerate + 2 H(+). Catalyzes the addition of molecular CO(2) and H(2)O to ribulose 1,5-bisphosphate (RuBP), generating two molecules of 3-phosphoglycerate (3-PGA). Functions in an archaeal AMP degradation pathway, together with AMP phosphorylase and R15P isomerase. This chain is Ribulose bisphosphate carboxylase, found in Methanosarcina mazei (strain ATCC BAA-159 / DSM 3647 / Goe1 / Go1 / JCM 11833 / OCM 88) (Methanosarcina frisia).